Reading from the N-terminus, the 199-residue chain is Protein-methionine-sulfoxide reductase heme-binding subunit MsrQ (199 aa).

A run of 5 helical transmembrane segments spans residues 13 to 33, 79 to 99, 120 to 140, 147 to 167, and 169 to 189; these read VLLH…VDQG, LLGL…ALLE, LGII…QIMM, WQKL…HYLW, and VKTL…LLLL.

Belongs to the MsrQ family. In terms of assembly, heterodimer of a catalytic subunit (MsrP) and a heme-binding subunit (MsrQ). It depends on FMN as a cofactor. Heme b serves as cofactor.

The protein localises to the cell inner membrane. Part of the MsrPQ system that repairs oxidized periplasmic proteins containing methionine sulfoxide residues (Met-O), using respiratory chain electrons. Thus protects these proteins from oxidative-stress damage caused by reactive species of oxygen and chlorine generated by the host defense mechanisms. MsrPQ is essential for the maintenance of envelope integrity under bleach stress, rescuing a wide series of structurally unrelated periplasmic proteins from methionine oxidation. MsrQ provides electrons for reduction to the reductase catalytic subunit MsrP, using the quinone pool of the respiratory chain. This chain is Protein-methionine-sulfoxide reductase heme-binding subunit MsrQ, found in Pectobacterium atrosepticum (strain SCRI 1043 / ATCC BAA-672) (Erwinia carotovora subsp. atroseptica).